We begin with the raw amino-acid sequence, 115 residues long: U3-lycotoxin-Ls1k (115 aa).

An N-terminal signal peptide occupies residues 1 to 20 (MKSVLLFGVLLVTLFSYSSA). The propeptide occupies 21–44 (EMLDDFDQADEDELLSLIEKEEAR). 4 disulfide bridges follow: C48–C63, C55–C72, C62–C87, and C74–C85.

Belongs to the neurotoxin 19 (CSTX) family. 01 subfamily. In terms of tissue distribution, expressed by the venom gland.

It localises to the secreted. This Lycosa singoriensis (Wolf spider) protein is U3-lycotoxin-Ls1k.